The primary structure comprises 222 residues: DNA-directed RNA polymerase V subunit 5A (222 aa).

It belongs to the archaeal Rpo5/eukaryotic RPB5 RNA polymerase subunit family. As to quaternary structure, component of the RNA polymerase V complex. As to expression, expressed in roots, leaves, siliques and seeds, and to a lower level, in flower buds and flowers.

Its subcellular location is the nucleus. DNA-dependent RNA polymerase catalyzes the transcription of DNA into RNA using the four ribonucleoside triphosphates as substrates. Component of RNA polymerase V involved in RNA-directed DNA methylation-dependent (RdDM) silencing of endogenous repeated sequences, including transposable elements. Required for establishment of DNA methylation. This chain is DNA-directed RNA polymerase V subunit 5A (NRPE5A), found in Arabidopsis thaliana (Mouse-ear cress).